Here is a 322-residue protein sequence, read N- to C-terminus: Putative heme-binding peroxidase (322 aa).

His-38 serves as the catalytic Proton acceptor. Residue His-162 coordinates heme b. Trp-178 functions as the Tryptophan radical intermediate in the catalytic mechanism. The disordered stretch occupies residues 288 to 322 (ISAPKKSNHPTGPAKGAQGGCPVAASQGGCPRAKL).

The protein belongs to the peroxidase family. Cytochrome c peroxidase subfamily. It depends on heme b as a cofactor.

Its function is as follows. Destroys radicals which are normally produced within the cells and which are toxic to biological systems. This Aspergillus fumigatus (strain ATCC MYA-4609 / CBS 101355 / FGSC A1100 / Af293) (Neosartorya fumigata) protein is Putative heme-binding peroxidase.